The primary structure comprises 89 residues: Small ribosomal subunit protein uS15 (89 aa).

A compositionally biased stretch (basic and acidic residues) spans 1-21; the sequence is MALSPEKKNEIIENFKTHEGD. The disordered stretch occupies residues 1-23; sequence MALSPEKKNEIIENFKTHEGDTG.

The protein belongs to the universal ribosomal protein uS15 family. As to quaternary structure, part of the 30S ribosomal subunit. Forms a bridge to the 50S subunit in the 70S ribosome, contacting the 23S rRNA.

Its function is as follows. One of the primary rRNA binding proteins, it binds directly to 16S rRNA where it helps nucleate assembly of the platform of the 30S subunit by binding and bridging several RNA helices of the 16S rRNA. In terms of biological role, forms an intersubunit bridge (bridge B4) with the 23S rRNA of the 50S subunit in the ribosome. The protein is Small ribosomal subunit protein uS15 of Desulforamulus reducens (strain ATCC BAA-1160 / DSM 100696 / MI-1) (Desulfotomaculum reducens).